A 135-amino-acid chain; its full sequence is Classical arabinogalactan protein 4 (135 aa).

Residues 1 to 21 (MGSKIVQVFLMLALFATSALA) form the signal peptide. Glutamine 22 is modified (pyrrolidone carboxylic acid). The segment at 22–112 (QAPAPTPTAT…PSDASPAPSA (91 aa)) is disordered. Residues proline 24, proline 26, proline 28, proline 32, proline 33, proline 34, proline 37, proline 38, and proline 39 each carry the 4-hydroxyproline modification. Proline 24, proline 26, proline 28, proline 32, proline 33, proline 34, proline 37, proline 38, and proline 39 each carry an O-linked (Ara...) hydroxyproline glycan. Positions 25–76 (APTPTATPPPATPPPVATPPPVATPPPAATPAPATPPPAATPAPATTPPSVA) are enriched in pro residues. The segment covering 96-112 (SPSSAPGPSDASPAPSA) has biased composition (low complexity). Serine 111 is lipidated: GPI-anchor amidated serine. The propeptide at 112 to 135 (AAFSNKAFFAGTAFAAIMYAAVLA) is removed in mature form.

This sequence belongs to the classical AGP family. O-glycosylated on hydroxyprolines; noncontiguous hydroxylproline residues are glycosylated with arabinogalactan. Highly expressed in roots, flowers and leaves.

It localises to the cell membrane. In terms of biological role, proteoglycan that seems to be implicated in diverse developmental roles such as differentiation, cell-cell recognition, embryogenesis and programmed cell death. The polypeptide is Classical arabinogalactan protein 4 (AGP4) (Arabidopsis thaliana (Mouse-ear cress)).